Consider the following 309-residue polypeptide: Calponin-2 (309 aa).

Serine 2 bears the N-acetylserine mark. 2 positions are modified to N6-acetyllysine: lysine 8 and lysine 25. The Calponin-homology (CH) domain occupies 28–132 (PQKEAELRSW…SLLALAGKAK (105 aa)). A Phosphoserine modification is found at serine 138. 3 Calponin-like repeats span residues 166–191 (IGLQMGTNKCASQSGMTAYGTRRHLY), 206–231 (ISLQMGTNKCASQVGMTAPGTRRHIY), and 245–269 (MSLQMGYTQGANQSGQVFGLGRQIY). A disordered region spans residues 273 to 309 (YCPQGPAADGAPAAAGDGPGPGEPSECPPYYQEEAGY). Over residues 277-288 (GPAADGAPAAAG) the composition is skewed to low complexity.

The protein belongs to the calponin family.

Thin filament-associated protein that is implicated in the regulation and modulation of smooth muscle contraction. It is capable of binding to actin, calmodulin and tropomyosin. The interaction of calponin with actin inhibits the actomyosin Mg-ATPase activity. This Bos taurus (Bovine) protein is Calponin-2 (CNN2).